The primary structure comprises 417 residues: Gelsolin (417 aa).

Residues 93-171 (KVPVLESHYG…VVQGKEPAHL (79 aa)) form a Gelsolin-like 4 repeat. Ca(2+)-binding residues include Gly-107, Asp-108, Glu-138, Asp-150, Gly-155, Pro-157, Thr-187, Asn-227, Asp-228, Glu-250, Asp-331, Asp-332, and Glu-354. Gelsolin-like repeat units lie at residues 213-261 (RAVE…LKIL) and 316-392 (IEEV…PTFI).

Belongs to the villin/gelsolin family.

The protein resides in the cytoplasm. It localises to the cytoskeleton. Calcium-regulated, actin-modulating protein that binds to the plus (or barbed) ends of actin monomers or filaments, preventing monomer exchange (end-blocking or capping). It can promote the assembly of monomers into filaments (nucleation) as well as sever filaments already formed. Plays a role in ciliogenesis. In Xenopus laevis (African clawed frog), this protein is Gelsolin (gsn).